The chain runs to 236 residues: Ascorbate-specific transmembrane electron transporter 2 (236 aa).

The Cytoplasmic segment spans residues Met1–Thr13. A helical transmembrane segment spans residues Tyr14 to Phe34. Positions Ala15 to Ile219 constitute a Cytochrome b561 domain. The Extracellular segment spans residues Arg35–Asn50. The chain crosses the membrane as a helical span at residues Val51–Tyr71. A heme b-binding site is contributed by His52. L-ascorbate is bound at residue Ala67–Pro75. Residues Arg72 to Leu84 lie on the Cytoplasmic side of the membrane. The helical transmembrane segment at Ile85–Phe105 threads the bilayer. Residues His86 and His120 each contribute to the heme b site. At Lys106 to Trp122 the chain is on the extracellular side. Residue Leu116 to Ile125 participates in monodehydro-L-ascorbate radical binding. A helical membrane pass occupies residues Ile123–Phe143. Over Phe144–Lys153 the chain is Cytoplasmic. Residues Gly154 to Ala174 form a helical membrane-spanning segment. Heme b is bound at residue His159. The Extracellular portion of the chain corresponds to Glu175–Asn201. A helical membrane pass occupies residues Phe202–Val222. Residues Arg223 to Asn236 are Cytoplasmic-facing.

Requires heme b as cofactor.

The protein localises to the membrane. Functionally, two-heme-containing cytochrome. Catalyzes ascorbate-dependent trans-membrane electron transfer by utilizing a concerted H(+)/e(-) transfer mechanism. The polypeptide is Ascorbate-specific transmembrane electron transporter 2 (Zea mays (Maize)).